Reading from the N-terminus, the 467-residue chain is Dimethylamine methyltransferase MtbB3 (467 aa).

Position 356 (Pyl-356) is a non-standard amino acid, pyrrolysine.

Belongs to the dimethylamine methyltransferase family.

It catalyses the reaction Co(I)-[dimethylamine-specific corrinoid protein] + dimethylamine + H(+) = methyl-Co(III)-[dimethylamine-specific corrinoid protein] + methylamine. The protein operates within one-carbon metabolism; methanogenesis from dimethylamine. Its function is as follows. Catalyzes the transfer of a methyl group from dimethylamine to the corrinoid cofactor of MtbC. This chain is Dimethylamine methyltransferase MtbB3 (mtbB3), found in Methanosarcina mazei (strain ATCC BAA-159 / DSM 3647 / Goe1 / Go1 / JCM 11833 / OCM 88) (Methanosarcina frisia).